A 215-amino-acid polypeptide reads, in one-letter code: Uridine kinase (215 aa).

16–23 (GASASGKS) lines the ATP pocket.

It belongs to the uridine kinase family.

The protein resides in the cytoplasm. The enzyme catalyses uridine + ATP = UMP + ADP + H(+). The catalysed reaction is cytidine + ATP = CMP + ADP + H(+). The protein operates within pyrimidine metabolism; CTP biosynthesis via salvage pathway; CTP from cytidine: step 1/3. Its pathway is pyrimidine metabolism; UMP biosynthesis via salvage pathway; UMP from uridine: step 1/1. This chain is Uridine kinase, found in Aliivibrio fischeri (strain ATCC 700601 / ES114) (Vibrio fischeri).